A 957-amino-acid polypeptide reads, in one-letter code: Glycine dehydrogenase (decarboxylating) (957 aa).

Lysine 708 carries the post-translational modification N6-(pyridoxal phosphate)lysine.

Belongs to the GcvP family. As to quaternary structure, the glycine cleavage system is composed of four proteins: P, T, L and H. Requires pyridoxal 5'-phosphate as cofactor.

It catalyses the reaction N(6)-[(R)-lipoyl]-L-lysyl-[glycine-cleavage complex H protein] + glycine + H(+) = N(6)-[(R)-S(8)-aminomethyldihydrolipoyl]-L-lysyl-[glycine-cleavage complex H protein] + CO2. Its function is as follows. The glycine cleavage system catalyzes the degradation of glycine. The P protein binds the alpha-amino group of glycine through its pyridoxal phosphate cofactor; CO(2) is released and the remaining methylamine moiety is then transferred to the lipoamide cofactor of the H protein. The polypeptide is Glycine dehydrogenase (decarboxylating) (Klebsiella pneumoniae subsp. pneumoniae (strain ATCC 700721 / MGH 78578)).